We begin with the raw amino-acid sequence, 216 residues long: Hydrogenase-4 component E (216 aa).

At 1–3 the chain is on the periplasmic side; the sequence is MTG. A helical transmembrane segment spans residues 4–24; the sequence is SMIVNNLAGLMMLTSLFVISV. At 25-38 the chain is on the cytoplasmic side; sequence KSYRLSCGFYACQS. The next 2 helical transmembrane spans lie at 39–59 and 60–80; these read LVLV…QLLI and WSAS…TYAA. At 81-92 the chain is on the cytoplasmic side; sequence RNIPQNIPEKAL. The chain crosses the membrane as a helical span at residues 93 to 113; it reads FGPAMMALLAALIVLLCAFVV. At 114 to 122 the chain is on the periplasmic side; that stretch reads QPVKLPMAT. The chain crosses the membrane as a helical span at residues 123–143; it reads GLKPALAVALGHFLLGLLCIV. At 144–150 the chain is on the cytoplasmic side; it reads SQRNILR. The chain crosses the membrane as a helical span at residues 151 to 171; sequence QIFGYCLMENGSHLVLALLAW. Over 172–175 the chain is Periplasmic; it reads RAPE. The chain crosses the membrane as a helical span at residues 176 to 196; sequence LVEIGIATDAIFAVIVMVLLA. The Cytoplasmic segment spans residues 197 to 216; it reads RKIWRTHGTLDVNNLTALKG.

The protein resides in the cell inner membrane. This Escherichia coli O157:H7 protein is Hydrogenase-4 component E (hyfE).